Reading from the N-terminus, the 1273-residue chain is Receptor-type tyrosine-protein phosphatase C (1273 aa).

Residues 1–23 form the signal peptide; the sequence is MYLWLKLLAFSLALLGPEVFVTG. The Extracellular segment spans residues 24 to 546; the sequence is QGTTDDGLDT…KPQSTSYNSK (523 aa). The disordered stretch occupies residues 45–192; that stretch reads LPARTTEFTP…TEIATPQTKP (148 aa). 3 stretches are compositionally biased toward polar residues: residues 50–77, 84–111, and 141–192; these read TEFT…SSTL, QPDS…TLTA, and RNST…QTKP. Residue Asn62 is glycosylated (N-linked (GlcNAc...) asparagine). Asn142, Asn153, Asn164, Asn178, Asn200, Asn245, Asn250, Asn271, Asn282, Asn327, Asn333, Asn371, Asn374, Asn471, and Asn502 each carry an N-linked (GlcNAc...) asparagine glycan. 2 consecutive Fibronectin type-III domains span residues 361-452 and 453-545; these read PEML…TKAA and RPGK…SYNS. Residues 547–567 traverse the membrane as a helical segment; that stretch reads ALIIFLVFLIIVTSIALLVVL. The Cytoplasmic portion of the chain corresponds to 568-1273; the sequence is YKIYDLRKKR…PMSPALTPSS (706 aa). 2 Tyrosine-protein phosphatase domains span residues 622–881 and 913–1196; these read FLAE…LVEY and LEAE…MASI. Tyr652 is modified (phosphotyrosine). Substrate-binding positions include Asp790, 822 to 828, and Gln866; that span reads CSAGVGR. Cys822 functions as the Phosphocysteine intermediate in the catalytic mechanism. A phosphoserine mark is found at Ser944, Ser963, Ser966, Ser970, Ser973, Ser974, and Ser978. Residues 960–984 are disordered; it reads LEMSKESEAESDESSDEDSDSEETS. Residues 968–981 show a composition bias toward acidic residues; the sequence is AESDESSDEDSDSE. Catalysis depends on Cys1137, which acts as the Phosphocysteine intermediate. Phosphoserine is present on residues Ser1209 and Ser1266. The interval 1219–1273 is disordered; it reads VDGAKQDANCVQPADPLNKAQEDSKEVGASEPASGSEEPEHSANGPMSPALTPSS.

Belongs to the protein-tyrosine phosphatase family. Receptor class 1/6 subfamily. In terms of assembly, interacts with SKAP1. Interacts with DPP4; the interaction is enhanced in an interleukin-12-dependent manner in activated lymphocytes. Binds GANAB and PRKCSH. Interacts with CD53; this interaction stabilizes PTPRC on the membrane and is required for optimal phosphatase activity. Interacts with CLEC10A. In terms of processing, heavily N- and O-glycosylated. Post-translationally, the cytoplasmic domain contains potential phosphorylation sites. As to expression, isoform 1 and isoform 2 are found in thymocyte and lymph node. Isoform 4 and isoform 3 are found in the lymph nod.

The protein localises to the cell membrane. The protein resides in the membrane raft. It localises to the synapse. It catalyses the reaction O-phospho-L-tyrosyl-[protein] + H2O = L-tyrosyl-[protein] + phosphate. In terms of biological role, protein tyrosine-protein phosphatase required for T-cell activation through the antigen receptor. Acts as a positive regulator of T-cell coactivation upon binding to DPP4. The first PTPase domain has enzymatic activity, while the second one seems to affect the substrate specificity of the first one. Upon T-cell activation, recruits and dephosphorylates SKAP1 and FYN. Dephosphorylates LYN, and thereby modulates LYN activity. Interacts with CLEC10A at antigen presenting cell-T cell contact; CLEC10A on immature dendritic cells recognizes Tn antigen-carrying PTPRC/CD45 receptor on effector T cells and modulates T cell activation threshold to limit autoreactivity. In Rattus norvegicus (Rat), this protein is Receptor-type tyrosine-protein phosphatase C (Ptprc).